The following is a 705-amino-acid chain: Effector protein hopD1 (705 aa).

Polar residues-rich tracts occupy residues 1–11 (MNPLRSIQHNI) and 28–41 (QAQQSHPKRISPSQ). Disordered stretches follow at residues 1–41 (MNPL…SPSQ) and 173–207 (SSSLETPLLSSPDHSRPPSQPKPVHIGSVRRDSGS). Residues 173–184 (SSSLETPLLSSP) are compositionally biased toward low complexity.

It is found in the secreted. Effector protein involved in non-host recognition. This Pseudomonas syringae pv. tomato (strain ATCC BAA-871 / DC3000) protein is Effector protein hopD1 (hopD1).